The following is a 187-amino-acid chain: Ribosome-recycling factor (187 aa).

The protein belongs to the RRF family.

It is found in the cytoplasm. Functionally, responsible for the release of ribosomes from messenger RNA at the termination of protein biosynthesis. May increase the efficiency of translation by recycling ribosomes from one round of translation to another. The sequence is that of Ribosome-recycling factor from Parabacteroides distasonis (strain ATCC 8503 / DSM 20701 / CIP 104284 / JCM 5825 / NCTC 11152).